Consider the following 645-residue polypeptide: Methionine--tRNA ligase (645 aa).

A 'HIGH' region motif is present at residues 13–23 (YYPSTNLHIGN). Zn(2+) contacts are provided by C128, C131, C145, and C148. A 'KMSKS' region motif is present at residues 298–302 (KMSKS). K301 contributes to the ATP binding site. One can recognise a tRNA-binding domain in the interval 544–645 (DFDKIDLRVV…GEMLTGSQVR (102 aa)).

Belongs to the class-I aminoacyl-tRNA synthetase family. MetG type 2A subfamily. In terms of assembly, homodimer. Requires Zn(2+) as cofactor.

It localises to the cytoplasm. The enzyme catalyses tRNA(Met) + L-methionine + ATP = L-methionyl-tRNA(Met) + AMP + diphosphate. Functionally, is required not only for elongation of protein synthesis but also for the initiation of all mRNA translation through initiator tRNA(fMet) aminoacylation. The polypeptide is Methionine--tRNA ligase (metG) (Clostridium perfringens (strain 13 / Type A)).